Here is a 187-residue protein sequence, read N- to C-terminus: Orotate phosphoribosyltransferase (187 aa).

5-phospho-alpha-D-ribose 1-diphosphate-binding positions include arginine 98, lysine 99, lysine 102, histidine 104, and glutamate 128–serine 136. Residues threonine 132 and arginine 160 each contribute to the orotate site.

Belongs to the purine/pyrimidine phosphoribosyltransferase family. PyrE subfamily. In terms of assembly, homodimer. Mg(2+) is required as a cofactor.

It catalyses the reaction orotidine 5'-phosphate + diphosphate = orotate + 5-phospho-alpha-D-ribose 1-diphosphate. Its pathway is pyrimidine metabolism; UMP biosynthesis via de novo pathway; UMP from orotate: step 1/2. Functionally, catalyzes the transfer of a ribosyl phosphate group from 5-phosphoribose 1-diphosphate to orotate, leading to the formation of orotidine monophosphate (OMP). This Rhodopseudomonas palustris (strain BisB5) protein is Orotate phosphoribosyltransferase.